A 172-amino-acid polypeptide reads, in one-letter code: Endoribonuclease YbeY (172 aa).

Zn(2+)-binding residues include histidine 137, histidine 141, and histidine 147.

The protein belongs to the endoribonuclease YbeY family. It depends on Zn(2+) as a cofactor.

It is found in the cytoplasm. In terms of biological role, single strand-specific metallo-endoribonuclease involved in late-stage 70S ribosome quality control and in maturation of the 3' terminus of the 16S rRNA. This Dehalococcoides mccartyi (strain ATCC BAA-2266 / KCTC 15142 / 195) (Dehalococcoides ethenogenes (strain 195)) protein is Endoribonuclease YbeY.